A 567-amino-acid polypeptide reads, in one-letter code: Formate--tetrahydrofolate ligase (567 aa).

An ATP-binding site is contributed by 68-75; that stretch reads TPLGEGKT.

Belongs to the formate--tetrahydrofolate ligase family.

It carries out the reaction (6S)-5,6,7,8-tetrahydrofolate + formate + ATP = (6R)-10-formyltetrahydrofolate + ADP + phosphate. The protein operates within one-carbon metabolism; tetrahydrofolate interconversion. This chain is Formate--tetrahydrofolate ligase, found in Desulforamulus reducens (strain ATCC BAA-1160 / DSM 100696 / MI-1) (Desulfotomaculum reducens).